A 305-amino-acid chain; its full sequence is Ribosomal RNA small subunit methyltransferase H (305 aa).

Residues 30–32 (GGH), Asp-49, Phe-74, Asp-96, and Gln-103 each bind S-adenosyl-L-methionine.

It belongs to the methyltransferase superfamily. RsmH family.

It is found in the cytoplasm. It carries out the reaction cytidine(1402) in 16S rRNA + S-adenosyl-L-methionine = N(4)-methylcytidine(1402) in 16S rRNA + S-adenosyl-L-homocysteine + H(+). Specifically methylates the N4 position of cytidine in position 1402 (C1402) of 16S rRNA. This Francisella tularensis subsp. mediasiatica (strain FSC147) protein is Ribosomal RNA small subunit methyltransferase H.